We begin with the raw amino-acid sequence, 176 residues long: MATATDRAPHQVQVHTPTTQRVDVQRRGYDVSGGGVKTFLPDRGPSTSQIIAVLVGVPTGGTLLLLSGLSLLGTIIGLAIATPVFTFFSPVIVPAVVTIGLAVIGILTAGACGLTGLMSLSWMINFIRQVHGTTVPDQLDSAKRRMADMADYVGQKTKDAGQEIQTKAQDVKRSSS.

The residue at position 2 (A2) is an N-acetylalanine; alternate. 2 helical membrane passes run 61-81 (GTLL…LAIA) and 87-107 (FFSP…IGIL). The segment at 156-176 (KTKDAGQEIQTKAQDVKRSSS) is disordered.

Belongs to the oleosin family. As to quaternary structure, homodimer. Forms oligomers. In terms of tissue distribution, expressed in seeds (at protein level). Not expressed in leaves.

It is found in the lipid droplet. It localises to the membrane. Its function is as follows. May have a structural role to stabilize the lipid body during desiccation of the seed by preventing coalescence of the oil. Probably interacts with both lipid and phospholipid moieties of lipid bodies. May also provide recognition signals for specific lipase anchorage in lipolysis during seedling growth. In Arachis hypogaea (Peanut), this protein is Oleosin Ara h 14.0102.